The sequence spans 478 residues: MALAAPESSKNLGLSSLPTIAAIATPLGRGGVGVIRLSGTHAYSIACTLTGKSAFKPRMASFCRFYQADGTVIDEGLVLYFKGPHSFTGEDVIELQGHGGMILQNQLLARVFELGAKQASAGEFSYRAFDNDKLDLVQAEAIADAIDATSAAAASSAIRSLSGEFSQKINQLLEQLIHLRLHVEAAIDFPDEEDVDFLSDGVIQGKLEQTQEKIQQVLATAKQGQLLRDGIHVVLAGRPNAGKSSLLNRLAGQERAIVTDVAGTTRDTLQETVVLNGLTLHLTDTAGLRETEDTVERIGIERARTAIAQADMLLMVYDVTRDLEEESTPLQLAEQLFGELPEAKRLLIIANKSDLLNNNSSKEITSISQQEIHNRGYEQVNVSCETGAGIDDLVETLCAKVGFHPPENSLIARTRHLDALRRTAEYLAEAHEQLTVFKAGELVAESLRQAQHSLGEITGEFSADDLLGKIFGSFCIGK.

(6S)-5-formyl-5,6,7,8-tetrahydrofolate contacts are provided by Arg36, Glu94, and Lys133. Residues 230 to 402 form the TrmE-type G domain; sequence GIHVVLAGRP…LVETLCAKVG (173 aa). Asn240 contacts K(+). Residues 240–245, 259–265, and 284–287 contribute to the GTP site; these read NAGKSS, TDVAGTT, and DTAG. Residue Ser244 coordinates Mg(2+). K(+)-binding residues include Thr259, Val261, and Thr264. Residue Thr265 participates in Mg(2+) binding. (6S)-5-formyl-5,6,7,8-tetrahydrofolate is bound at residue Lys478.

This sequence belongs to the TRAFAC class TrmE-Era-EngA-EngB-Septin-like GTPase superfamily. TrmE GTPase family. Homodimer. Heterotetramer of two MnmE and two MnmG subunits. K(+) is required as a cofactor.

Its subcellular location is the cytoplasm. Its function is as follows. Exhibits a very high intrinsic GTPase hydrolysis rate. Involved in the addition of a carboxymethylaminomethyl (cmnm) group at the wobble position (U34) of certain tRNAs, forming tRNA-cmnm(5)s(2)U34. The chain is tRNA modification GTPase MnmE from Psychrobacter cryohalolentis (strain ATCC BAA-1226 / DSM 17306 / VKM B-2378 / K5).